The sequence spans 263 residues: Polyamine aminopropyltransferase (263 aa).

The region spanning 1 to 221 (MARHPYRRLR…AVMAFQSSPK (221 aa)) is the PABS domain. S-methyl-5'-thioadenosine is bound by residues aspartate 98 and 126-127 (DG). The Proton acceptor role is filled by aspartate 144.

The protein belongs to the spermidine/spermine synthase family. Homodimer or homotetramer.

The protein localises to the cytoplasm. It carries out the reaction S-adenosyl 3-(methylsulfanyl)propylamine + putrescine = S-methyl-5'-thioadenosine + spermidine + H(+). It participates in amine and polyamine biosynthesis; spermidine biosynthesis; spermidine from putrescine: step 1/1. Its function is as follows. Catalyzes the irreversible transfer of a propylamine group from the amino donor S-adenosylmethioninamine (decarboxy-AdoMet) to putrescine (1,4-diaminobutane) to yield spermidine. In Neisseria meningitidis serogroup A / serotype 4A (strain DSM 15465 / Z2491), this protein is Polyamine aminopropyltransferase.